A 548-amino-acid polypeptide reads, in one-letter code: MPSVMKCGYLATAGLIGICIHLWYFRYGEHHLYPWRYVRFHLCLTMGVSALLYAKKPPQYTLSPGDLVKDTCLLMVTYLIGLFTSLLLYRTLFHPLRQIRGPWAAKVSSFWLSFRLRRGPSFRILHELHEEYGPVVRVGPSEVSIIHPEAIGIIYGPNSRCSKNAFYDNGHPMMSLHSYRDRTAHDQRRRVWSAGFGDRALRGYEQRMRVYRQKLFQRLEERADAESTINISQWFNFYSYDTMGDLAFARSFDMLDASRNHWAVDMLMHGMIGYRYLFPSWFFRLLATMPSLSNDWHKFIGFATDTMLRRLREQVGVPDIFASLLAPLNGRDPTDDERNMLMGDAMLIITAGSDTTATSLTSIVYELARRPDEVDKLRAEIEPIEADSDGEYQHDTLAKLPHLNGFINEAFRLHSPIPGVIPRKTPPEGIHVKDIFIPGNMTVFSPQWSMGRSEAAYVDPAIFNPERWYKHIDLVKEKSVFAPFSIGPYSCIGKPLAMMNIRTTVARLIMRFDVRFPEGEDGIRWMDAADEHFAMGIHQMPVVLTRRH.

3 helical membrane passes run 5 to 25 (MKCGYLATAGLIGICIHLWYF), 35 to 54 (WRYVRFHLCLTMGVSALLYA), and 73 to 93 (LLMVTYLIGLFTSLLLYRTLF). A heme-binding site is contributed by C491.

Belongs to the cytochrome P450 family. Requires heme as cofactor.

The protein localises to the membrane. The catalysed reaction is tryprostatin B + reduced [NADPH--hemoprotein reductase] + O2 = 6-hydroxytryprostatin B + oxidized [NADPH--hemoprotein reductase] + H2O + H(+). It functions in the pathway mycotoxin biosynthesis. Cytochrome P450 monooxygenase; part of the gene cluster that mediates the biosynthesis of fumitremorgins, indole alkaloids that carry not only intriguing chemical structures, but also interesting biological and pharmacological activities. The biosynthesis of fumitremorgin-type alkaloids begins by condensation of the two amino acids L-tryptophan and L-proline to brevianamide F, catalyzed by the non-ribosomal peptide synthetase ftmPS/ftmA. Brevianamide F is then prenylated by the prenyltransferase ftmPT1/ftmB in the presence of dimethylallyl diphosphate, resulting in the formation of tryprostatin B. The three cytochrome P450 monooxygenases, ftmP450-1/ftmC, ftmP450-2/ftmE and ftmP450-3/FtmG, are responsible for the conversion of tryprostatin B to 6-hydroxytryprostatin B, tryprostatin A to fumitremorgin C and fumitremorgin C to 12,13-dihydroxyfumitremorgin C, respectively. The putative methyltransferase ftmMT/ftmD is expected for the conversion of 6-hydroxytryprostatin B to tryprostatin A. FtmPT2/FtmH catalyzes the prenylation of 12,13-dihydroxyfumitre-morgin C in the presence of dimethylallyl diphosphate, resulting in the formation of fumitremorgin B. Fumitremorgin B is further converted to verruculogen by ftmOx1/ftmF via the insertion of an endoperoxide bond between the two prenyl moieties. Finally, verruculogen is further converted to fumitremorgin A by the verruculogen prenyltransferase ftmPT3. This chain is Tryprostatin B 6-hydroxylase, found in Neosartorya fischeri (strain ATCC 1020 / DSM 3700 / CBS 544.65 / FGSC A1164 / JCM 1740 / NRRL 181 / WB 181) (Aspergillus fischerianus).